We begin with the raw amino-acid sequence, 1454 residues long: MGAQLSLVVQASPSIAIFSYIDVLEEVHYVSQLNSSRFLKTCKALDPNGEIVIKVFIKPKDQYSLRPFLQRIRAQSFKLGQLPHVLNYSKLIETNRAGYMIRQHLKNNLYDRLSLRPYLQDIELKFIAFQLLNALKDIHNLNIVHGDIKTENILVTSWNWCILTDFAAFIKPVYLPEDNPGEFLFYFDTSKRRTCYLAPERFNSKLYQDGKSNNGRLTKEMDIFSLGCVIAEIFAEGRPIFNLSQLFKYKSNSYDVNREFLMEEMNSTDLRNLVLDMIQLDPSKRLSCDELLNKYRGIFFPDYFYTFIYDYFRNLVTMTTSTPISDNTCTNSTLEDNVKLLDETTEKIYRDFSQICHCLDFPLIKDGGEIGSDPPILESYKIEIEISRFLNTNLYFPQNYHLVLQQFTKVSEKIKSVKEECALLFISYLSHSIRSIVSTATKLKNLELLAVFAQFVSDENKIDRVVPYFVCCFEDSDQDVQALSLLTLIQVLTSVRKLNQLNENIFVDYLLPRLKRLLISNRQNTNYLRIVFANCLSDLAIIINRFQEFTFAQHCNDNSMDNNTEIMESSTKYSAKLIQSVEDLTVSFLTDNDTYVKMALLQNILPLCKFFGRERTNDIILSHLITYLNDKDPALRVSLIQTISGISILLGTVTLEQYILPLLIQTITDSEELVVISVLQSLKSLFKTGLIRKKYYIDISKTTSPLLLHPNNWIRQFTLMIIIEIINKLSKAEVYCILYPIIRPFFEFDVEFNFKSMISCCKQPVSRSVYNLLCSWSVRASKSLFWKKIITNHVDSFGNNRIEFITKNYSSKNYGFNKRDTKSSSSLKGIKTSSTVYSHDNKEIPLTAEDRNWIDKFHIIGLTEKDIWKIVALRGYVIRTARVMAANPDFPYNNSNYRPLVQNSPPNLNLTNIMPRNIFFDVEFAEESTSEGQDSNLENQQIYKYDESEKDSNKLNINGSKQLSTVMDINGSLIFKNKSIATTTSNLKNVFVQLEPTSYHMHSPNHGLKDNANVKPERKVVVSNSYEGDVESIEKFLSTFKILPPLRDYKEFGPIQEIVRSPNMGNLRGKLIATLMENEPNSITSSAVSPGETPYLITGSDQGVIKIWNLKEIIVGEVYSSSLTYDCSSTVTQITMIPNFDAFAVSSKDGQIIVLKVNHYQQESEVKFLNCECIRKINLKNFGKNEYAVRMRAFVNEEKSLLVALTNLSRVIIFDIRTLERLQIIENSPRHGAVSSICIDEECCVLILGTTRGIIDIWDIRFNVLIRSWSFGDHAPITHVEVCQFYGKNSVIVVGGSSKTFLTIWNFVKGHCQYAFINSDEQPSMEHFLPIEKGLEELNFCGIRSLNALSTISVSNDKILLTDEATSSIVMFSLNELSSSKAVISPSRFSDVFIPTQVTANLTMLLRKMKRTSTHSVDDSLYHHDIINSISTCEVDETPLLVACDNSGLIGIFQ.

The N-myristoyl glycine moiety is linked to residue Gly-2. In terms of domain architecture, Protein kinase spans 27-300 (VHYVSQLNSS…LLNKYRGIFF (274 aa)). Residues 33 to 41 (LNSSRFLKT) and Lys-54 each bind ATP. The active-site Proton acceptor is the Asp-147. HEAT repeat units lie at residues 460–497 (NKID…SVRK), 576–613 (KLIQ…FFGR), 615–652 (RTND…LLGT), and 654–691 (TLEQ…TGLI). WD repeat units follow at residues 1078-1118 (NEPN…VGEV), 1126-1165 (DCSS…QESE), 1229-1268 (PRHG…LIRS), 1275-1315 (APIT…CQYA), 1344-1382 (RSLN…SSKA), and 1422-1454 (YHHD…GIFQ).

The protein belongs to the protein kinase superfamily. Ser/Thr protein kinase family. As to quaternary structure, component of the autophagy-specific VPS34 PI3-kinase complex I composed of VPS15, VPS30, VPS34, ATG14 and ATG38; and of the VPS34 PI3-kinase complex II composed of VPS15, VPS30, VPS34 and VPS38. Interacts directly with ATG14 and GPA1. Interacts directly with VPS34. Post-translationally, autophosphorylated.

It localises to the golgi apparatus. The protein localises to the trans-Golgi network membrane. It is found in the endosome membrane. The enzyme catalyses L-seryl-[protein] + ATP = O-phospho-L-seryl-[protein] + ADP + H(+). It carries out the reaction L-threonyl-[protein] + ATP = O-phospho-L-threonyl-[protein] + ADP + H(+). Its function is as follows. Serine/threonine-protein kinase required for cytoplasm to vacuole transport (Cvt) and autophagy as a part of the autophagy-specific VPS34 PI3-kinase complex I. This complex is essential to recruit the ATG8-phosphatidylinositol conjugate and the ATG12-ATG5 conjugate to the pre-autophagosomal structure. Is also involved in endosome-to-Golgi retrograde transport as part of the VPS34 PI3-kinase complex II. This second complex is required for the endosome-to-Golgi retrieval of PEP1 and KEX2, and the recruitment of VPS5 and VPS7, two components of the retromer complex, to endosomal membranes (probably through the synthesis of a specific pool of phosphatidylinositol 3-phosphate recruiting the retromer to the endosomes). By regulating VPS34 kinase activity, VPS15 appears to be essential for the efficient delivery of soluble hydrolases to the yeast vacuole. May function as a G protein beta subunit to propagate the pheromone response at the endosome with GPA1. The chain is Serine/threonine-protein kinase VPS15 from Saccharomyces cerevisiae (strain ATCC 204508 / S288c) (Baker's yeast).